The following is a 94-amino-acid chain: Co-chaperonin GroES (94 aa).

Belongs to the GroES chaperonin family. Heptamer of 7 subunits arranged in a ring. Interacts with the chaperonin GroEL.

Its subcellular location is the cytoplasm. In terms of biological role, together with the chaperonin GroEL, plays an essential role in assisting protein folding. The GroEL-GroES system forms a nano-cage that allows encapsulation of the non-native substrate proteins and provides a physical environment optimized to promote and accelerate protein folding. GroES binds to the apical surface of the GroEL ring, thereby capping the opening of the GroEL channel. In Anoxybacillus flavithermus (strain DSM 21510 / WK1), this protein is Co-chaperonin GroES.